The chain runs to 320 residues: ATP-dependent 6-phosphofructokinase (320 aa).

Gly12 contacts ATP. Position 22–26 (22–26 (RGVVR)) interacts with ADP. Residues 73-74 (RF) and 103-106 (GDGS) contribute to the ATP site. Mg(2+) is bound at residue Asp104. 126–128 (TID) lines the substrate pocket. Catalysis depends on Asp128, which acts as the Proton acceptor. Arg155 provides a ligand contact to ADP. Residues Arg163 and 170-172 (MGR) each bind substrate. ADP-binding positions include 186–188 (GCE), Lys212, and 214–216 (KKH). Residues Glu223, Arg244, and 250-253 (HIQR) each bind substrate.

The protein belongs to the phosphofructokinase type A (PFKA) family. ATP-dependent PFK group I subfamily. Prokaryotic clade 'B1' sub-subfamily. Homotetramer. Requires Mg(2+) as cofactor.

It localises to the cytoplasm. It carries out the reaction beta-D-fructose 6-phosphate + ATP = beta-D-fructose 1,6-bisphosphate + ADP + H(+). The protein operates within carbohydrate degradation; glycolysis; D-glyceraldehyde 3-phosphate and glycerone phosphate from D-glucose: step 3/4. With respect to regulation, allosterically activated by ADP and other diphosphonucleosides, and allosterically inhibited by phosphoenolpyruvate. Functionally, catalyzes the phosphorylation of D-fructose 6-phosphate to fructose 1,6-bisphosphate by ATP, the first committing step of glycolysis. The sequence is that of ATP-dependent 6-phosphofructokinase from Blochmanniella floridana.